Here is a 621-residue protein sequence, read N- to C-terminus: Chaperone protein HtpG (621 aa).

Positions 1–341 (MSNQEYTFQT…SEDLPLNVSR (341 aa)) are a; substrate-binding. Residues 342–547 (EILQQNKILA…GDEQNAMMAN (206 aa)) are b. Residues 548-621 (LMRQMGQNMP…RLNSVLLKAL (74 aa)) are c.

It belongs to the heat shock protein 90 family. As to quaternary structure, homodimer.

It localises to the cytoplasm. Functionally, molecular chaperone. Has ATPase activity. The sequence is that of Chaperone protein HtpG from Helicobacter acinonychis (strain Sheeba).